We begin with the raw amino-acid sequence, 491 residues long: Anthranilate synthase component 1 (491 aa).

Residues Ser49 and 271-273 (PYL) each bind L-tryptophan. Position 306-307 (306-307 (GT)) interacts with chorismate. Glu333 is a binding site for Mg(2+). Chorismate contacts are provided by residues Tyr421, Arg441, 455 to 457 (GAG), and Gly457. Glu470 lines the Mg(2+) pocket.

This sequence belongs to the anthranilate synthase component I family. As to quaternary structure, heterotetramer consisting of two non-identical subunits: a beta subunit (TrpG) and a large alpha subunit (TrpE). Mg(2+) is required as a cofactor.

The enzyme catalyses chorismate + L-glutamine = anthranilate + pyruvate + L-glutamate + H(+). It participates in amino-acid biosynthesis; L-tryptophan biosynthesis; L-tryptophan from chorismate: step 1/5. Feedback inhibited by tryptophan. Functionally, part of a heterotetrameric complex that catalyzes the two-step biosynthesis of anthranilate, an intermediate in the biosynthesis of L-tryptophan. In the first step, the glutamine-binding beta subunit (TrpG) of anthranilate synthase (AS) provides the glutamine amidotransferase activity which generates ammonia as a substrate that, along with chorismate, is used in the second step, catalyzed by the large alpha subunit of AS (TrpE) to produce anthranilate. In the absence of TrpG, TrpE can synthesize anthranilate directly from chorismate and high concentrations of ammonia. This chain is Anthranilate synthase component 1 (trpE), found in Neisseria gonorrhoeae (strain ATCC 700825 / FA 1090).